The sequence spans 476 residues: E3 SUMO-protein ligase EGR2 (476 aa).

Low complexity predominate over residues 127–141; the sequence is PASTTASSSVTSASP. Residues 127 to 178 form a disordered region; sequence PASTTASSSVTSASPNPLATGPLGVCTMSQTQPDLDHLYSPPPPPPPYSGCA. The HCFC1-binding-motif (HBM) motif lies at 162–165; sequence DHLY. Lys-247 is modified (N6-acetyllysine; by EP300). Disordered stretches follow at residues 275–300 and 318–341; these read GPSA…SSSA and RPIL…RPYP. Positions 281 to 290 are enriched in gly residues; it reads TGPGASGGSE. 3 consecutive C2H2-type zinc fingers follow at residues 340-364, 370-392, and 398-420; these read YPCP…IRIH, FQCR…IRTH, and FACD…TKIH. A disordered region spans residues 412-476; that stretch reads ERKRHTKIHL…APCSSRTRTP (65 aa). The segment covering 415-425 has biased composition (basic residues); it reads RHTKIHLRQKE. Positions 429–476 are enriched in low complexity; sequence SAPSASVPAPSTASCSGGVQPGGTLCSSNSSSLGGGPLAPCSSRTRTP.

It belongs to the EGR C2H2-type zinc-finger protein family. In terms of assembly, interacts with HCFC1. Interacts with WWP2. Interacts with UBC9. Interacts with CITED1. Interacts (via phosphorylated form) with SFN. Ubiquitinated by WWP2 leading to proteasomal degradation. Post-translationally, acetylated at Lys-247. May be deacetylated by HDAC6, HDAC10 or SIRT1.

Its subcellular location is the nucleus. It participates in protein modification; protein sumoylation. Sequence-specific DNA-binding transcription factor. Plays a role in hindbrain segmentation by regulating the expression of a subset of homeobox containing genes and in Schwann cell myelination by regulating the expression of genes involved in the formation and maintenance of myelin. Binds to two EGR2-consensus sites EGR2A (5'-CTGTAGGAG-3') and EGR2B (5'-ATGTAGGTG-3') in the HOXB3 enhancer and promotes HOXB3 transcriptional activation. Binds to specific DNA sites located in the promoter region of HOXA4, HOXB2 and ERBB2. Regulates hindbrain segmentation by controlling the expression of Hox genes, such as HOXA4, HOXB3 and HOXB2, and thereby specifying odd and even rhombomeres. Promotes the expression of HOXB3 in the rhombomere r5 in the hindbrain. Regulates myelination in the peripheral nervous system after birth, possibly by regulating the expression of myelin proteins, such as MPZ, and by promoting the differentiation of Schwann cells. Involved in the development of the jaw openener musculature, probably by playing a role in its innervation through trigeminal motor neurons. May play a role in adipogenesis, possibly by regulating the expression of CEBPB. In terms of biological role, E3 SUMO-protein ligase helping SUMO1 conjugation to its coregulators NAB1 and NAB2, whose sumoylation down-regulates EGR2 transcriptional activity. The polypeptide is E3 SUMO-protein ligase EGR2 (EGR2) (Homo sapiens (Human)).